A 567-amino-acid chain; its full sequence is MSSIMEKTDVSSSKHSFTFEPSSDEVGKAAEIVDTHENFYDDQGDIDNPEELAELGYKQEFRRQLSLFGIFSISFSVLGMLPSVASTLVFGLWYVGYPGLLWAWLIAMFFLICVSMSMAEICSAMPTSGGLYYAAAVFAPKGWGPLASWITGWSNYIGNIIGQPSVNSSAASMILGAVTVNRPDFVIQRWQWFLLAVAIQCFNCVLACLPTRIISRINGVATYLNTAFLFIAGITILAYGGKNHNFVKGTKIWGDYINTTQWPTGFAILLSFNSPIWTMSGYDAPFHLSEECSNASVNAPKAIVMTAVIGGVVGWIMQIIVAYTLTDIDSVMNTSGSMWTAYLVQAMPPKAALGILSLTIISAIIMGQSALIASSRIAYSYARDGILPFSGWIGTVNPYTQTPVNAVICNCIISILILFLTFAGTVTLDAVFSVGAVAAFIAFTVPIAIRVFFTKDADFRRGPWNLGKFSRPIGLLAVSFVALMIPILCFPSVKNPTAQEMNWTCLVYGGPMLFTLVWYAISARKWFKGPKASAHYKRPGEESSDIVEGVQADIPSSSDQLKIKGDL.

A run of 10 helical transmembrane segments spans residues 65–85, 92–112, 190–210, 220–240, 302–322, 353–373, 412–432, 434–454, 473–493, and 503–523; these read LSLF…PSVA, LWYV…FFLI, WQWF…ACLP, VATY…LAYG, AIVM…IIVA, LGIL…ALIA, IISI…DAVF, VGAV…VFFT, IGLL…FPSV, and WTCL…AISA.

The protein belongs to the amino acid-polyamine-organocation (APC) superfamily.

It localises to the membrane. This is an uncharacterized protein from Schizosaccharomyces pombe (strain 972 / ATCC 24843) (Fission yeast).